A 131-amino-acid polypeptide reads, in one-letter code: Type-5 thionin (131 aa).

The signal sequence occupies residues Met1–Gly29. Residues Leu67–Asp131 constitute a propeptide, acidic domain.

This sequence belongs to the plant thionin (TC 1.C.44) family. Is disulfide-linked. As to expression, developing endosperm.

The protein localises to the secreted. Thionins are small plant proteins which are toxic to animal cells. They seem to exert their toxic effect at the level of the cell membrane. Their precise function is not known. In Triticum aestivum (Wheat), this protein is Type-5 thionin (TTHV).